The following is a 332-amino-acid chain: tRNA dimethylallyltransferase (332 aa).

17-24 (GPTCSGKS) is a binding site for ATP. 19-24 (TCSGKS) provides a ligand contact to substrate. Interaction with substrate tRNA stretches follow at residues 42-45 (DSMQ) and 166-170 (QRVAR).

Belongs to the IPP transferase family. In terms of assembly, monomer. Mg(2+) is required as a cofactor.

The enzyme catalyses adenosine(37) in tRNA + dimethylallyl diphosphate = N(6)-dimethylallyladenosine(37) in tRNA + diphosphate. In terms of biological role, catalyzes the transfer of a dimethylallyl group onto the adenine at position 37 in tRNAs that read codons beginning with uridine, leading to the formation of N6-(dimethylallyl)adenosine (i(6)A). This Gluconacetobacter diazotrophicus (strain ATCC 49037 / DSM 5601 / CCUG 37298 / CIP 103539 / LMG 7603 / PAl5) protein is tRNA dimethylallyltransferase.